Here is a 116-residue protein sequence, read N- to C-terminus: Iron-sulfur cluster insertion protein ErpA (116 aa).

3 residues coordinate iron-sulfur cluster: Cys-44, Cys-108, and Cys-110.

The protein belongs to the HesB/IscA family. Homodimer. Requires iron-sulfur cluster as cofactor.

In terms of biological role, required for insertion of 4Fe-4S clusters for at least IspG. The polypeptide is Iron-sulfur cluster insertion protein ErpA (Aeromonas salmonicida (strain A449)).